A 284-amino-acid polypeptide reads, in one-letter code: L-ribulose-5-phosphate 3-epimerase UlaE (284 aa).

This sequence belongs to the L-ribulose-5-phosphate 3-epimerase family.

The catalysed reaction is L-ribulose 5-phosphate = L-xylulose 5-phosphate. Its pathway is cofactor degradation; L-ascorbate degradation; D-xylulose 5-phosphate from L-ascorbate: step 3/4. Catalyzes the isomerization of L-xylulose-5-phosphate to L-ribulose-5-phosphate. Is involved in the anaerobic L-ascorbate utilization. The polypeptide is L-ribulose-5-phosphate 3-epimerase UlaE (Escherichia coli (strain K12 / MC4100 / BW2952)).